A 571-amino-acid chain; its full sequence is Potassium-transporting ATPase potassium-binding subunit (571 aa).

A run of 12 helical transmembrane segments spans residues 5–25 (GWMQ…PLGG), 64–84 (LAYA…LYAL), 136–156 (GLTH…VALI), 179–199 (LYVL…QGMP), 220–240 (VGPV…GGFF), 254–274 (LSNF…TNVF), 285–305 (WAIL…TYWA), 330–350 (FGIA…CGAV), 375–395 (IIGG…VAIF), 421–441 (MLGI…ATVV), 488–508 (LAIG…AIAG), and 527–547 (GGLF…LTFF).

Belongs to the KdpA family. The system is composed of three essential subunits: KdpA, KdpB and KdpC.

It is found in the cell inner membrane. Part of the high-affinity ATP-driven potassium transport (or Kdp) system, which catalyzes the hydrolysis of ATP coupled with the electrogenic transport of potassium into the cytoplasm. This subunit binds the periplasmic potassium ions and delivers the ions to the membrane domain of KdpB through an intramembrane tunnel. This Methylorubrum extorquens (strain PA1) (Methylobacterium extorquens) protein is Potassium-transporting ATPase potassium-binding subunit.